Here is a 230-residue protein sequence, read N- to C-terminus: 7-cyano-7-deazaguanine synthase (230 aa).

14 to 24 (LSGGLDSTTTL) is an ATP binding site. Zn(2+) is bound by residues Cys-194, Cys-204, Cys-207, and Cys-210.

It belongs to the QueC family. Requires Zn(2+) as cofactor.

It catalyses the reaction 7-carboxy-7-deazaguanine + NH4(+) + ATP = 7-cyano-7-deazaguanine + ADP + phosphate + H2O + H(+). The protein operates within purine metabolism; 7-cyano-7-deazaguanine biosynthesis. In terms of biological role, catalyzes the ATP-dependent conversion of 7-carboxy-7-deazaguanine (CDG) to 7-cyano-7-deazaguanine (preQ(0)). The polypeptide is 7-cyano-7-deazaguanine synthase (Vesicomyosocius okutanii subsp. Calyptogena okutanii (strain HA)).